The primary structure comprises 673 residues: UvrABC system protein B (673 aa).

The region spanning 26-183 (EGLEDGLAHQ…RRLAELQYTR (158 aa)) is the Helicase ATP-binding domain. 39–46 (GVTGSGKT) provides a ligand contact to ATP. Positions 92-115 (YYDYYQPEAYVPSSDTFIEKDASV) match the Beta-hairpin motif. A Helicase C-terminal domain is found at 431-597 (QVDDLLSEIR…GLNKKVVDIL (167 aa)). Residues 633–668 (QQKIHELEGQMMQHAQNLEFEEAAQIRDQLHQLREL) form the UVR domain.

It belongs to the UvrB family. Forms a heterotetramer with UvrA during the search for lesions. Interacts with UvrC in an incision complex.

Its subcellular location is the cytoplasm. The UvrABC repair system catalyzes the recognition and processing of DNA lesions. A damage recognition complex composed of 2 UvrA and 2 UvrB subunits scans DNA for abnormalities. Upon binding of the UvrA(2)B(2) complex to a putative damaged site, the DNA wraps around one UvrB monomer. DNA wrap is dependent on ATP binding by UvrB and probably causes local melting of the DNA helix, facilitating insertion of UvrB beta-hairpin between the DNA strands. Then UvrB probes one DNA strand for the presence of a lesion. If a lesion is found the UvrA subunits dissociate and the UvrB-DNA preincision complex is formed. This complex is subsequently bound by UvrC and the second UvrB is released. If no lesion is found, the DNA wraps around the other UvrB subunit that will check the other stand for damage. This chain is UvrABC system protein B, found in Salmonella agona (strain SL483).